The primary structure comprises 415 residues: DNA primase DnaG (415 aa).

The region spanning 171–250 is the Toprim domain; the sequence is DAIIIVEGRA…AFSPRGKSVE (80 aa). Positions 177, 219, and 221 each coordinate Mg(2+). The tract at residues 280–323 is disordered; that stretch reads ELPGDLGGRPARTAPAHDEGGNSDTTGKQAVSQKRIRDGTSKVP. The span at 301-311 shows a compositional bias: polar residues; sequence NSDTTGKQAVS.

The protein belongs to the archaeal DnaG primase family. Forms a ternary complex with MCM helicase and DNA. Mg(2+) is required as a cofactor.

The enzyme catalyses ssDNA + n NTP = ssDNA/pppN(pN)n-1 hybrid + (n-1) diphosphate.. Functionally, RNA polymerase that catalyzes the synthesis of short RNA molecules used as primers for DNA polymerase during DNA replication. This Methanoregula boonei (strain DSM 21154 / JCM 14090 / 6A8) protein is DNA primase DnaG.